The primary structure comprises 685 residues: DNA ligase (685 aa).

NAD(+) contacts are provided by residues 48-52 (DAEYD), 97-98 (SL), and Glu131. Lys133 serves as the catalytic N6-AMP-lysine intermediate. NAD(+) contacts are provided by Arg154, Glu190, Lys304, and Lys328. Residues Cys422, Cys425, Cys440, and Cys445 each coordinate Zn(2+). Residues 603–685 (PEEGPLSGRR…RLLSGEERPG (83 aa)) enclose the BRCT domain.

Belongs to the NAD-dependent DNA ligase family. LigA subfamily. It depends on Mg(2+) as a cofactor. Requires Mn(2+) as cofactor.

The catalysed reaction is NAD(+) + (deoxyribonucleotide)n-3'-hydroxyl + 5'-phospho-(deoxyribonucleotide)m = (deoxyribonucleotide)n+m + AMP + beta-nicotinamide D-nucleotide.. In terms of biological role, DNA ligase that catalyzes the formation of phosphodiester linkages between 5'-phosphoryl and 3'-hydroxyl groups in double-stranded DNA using NAD as a coenzyme and as the energy source for the reaction. It is essential for DNA replication and repair of damaged DNA. In Rubrobacter xylanophilus (strain DSM 9941 / JCM 11954 / NBRC 16129 / PRD-1), this protein is DNA ligase.